The following is a 574-amino-acid chain: Sulfate adenylyltransferase (574 aa).

Residues 1 to 169 (MANPPHGGVL…IEAINKLNHY (169 aa)) are N-terminal. The tract at residues 170 to 394 (DYVALRYTPA…LRESSPPRHT (225 aa)) is catalytic. Position 197 (Gln197) interacts with sulfate. ATP contacts are provided by residues 197-200 (QTRN) and 291-294 (GRDH). Active-site residues include Thr198, Arg199, and Asn200. Residue Arg199 participates in sulfate binding. Ala295 is a sulfate binding site. Val333 serves as a coordination point for ATP. Residues 395–574 (QGFTIFLTGY…LETEGFFDRS (180 aa)) form an allosteric regulation domain; adenylyl-sulfate kinase-like region. Residues 434–437 (DTVR), Arg451, 477–478 (IA), and Arg516 each bind 3'-phosphoadenylyl sulfate.

It in the N-terminal section; belongs to the sulfate adenylyltransferase family. The protein in the C-terminal section; belongs to the APS kinase family. Homohexamer. Dimer of trimers.

The protein localises to the cytoplasm. The catalysed reaction is sulfate + ATP + H(+) = adenosine 5'-phosphosulfate + diphosphate. The protein operates within sulfur metabolism; hydrogen sulfide biosynthesis; sulfite from sulfate: step 1/3. Allosterically inhibited by 3'-phosphoadenosine 5'-phosphosulfate (PAPS). Its function is as follows. Catalyzes the first intracellular reaction of sulfate assimilation, forming adenosine-5'-phosphosulfate (APS) from inorganic sulfate and ATP. Plays an important role in sulfate activation as a component of the biosynthesis pathway of sulfur-containing amino acids. The polypeptide is Sulfate adenylyltransferase (Neosartorya fischeri (strain ATCC 1020 / DSM 3700 / CBS 544.65 / FGSC A1164 / JCM 1740 / NRRL 181 / WB 181) (Aspergillus fischerianus)).